The sequence spans 251 residues: uncharacterized protein (251 aa).

Residues 21-246 enclose the AMMECR1 domain; that stretch reads KGSSPFAFYA…ITYEEFNKQL (226 aa).

This is an uncharacterized protein from Saccharomyces cerevisiae (strain ATCC 204508 / S288c) (Baker's yeast).